A 612-amino-acid polypeptide reads, in one-letter code: Large ribosomal subunit assembly factor BipA (612 aa).

Residues 5 to 200 form the tr-type G domain; it reads NDLRNIAIIA…TIIKHVPAPV (196 aa). GTP contacts are provided by residues 17–22 and 130–133; these read DHGKTT and NKID.

Belongs to the TRAFAC class translation factor GTPase superfamily. Classic translation factor GTPase family. BipA subfamily. Monomer.

The protein localises to the cytoplasm. The enzyme catalyses GTP + H2O = GDP + phosphate + H(+). A 50S ribosomal subunit assembly protein with GTPase activity, required for 50S subunit assembly at low temperatures, may also play a role in translation. Binds GTP and analogs. Binds the 70S ribosome between the 30S and 50S subunits, in a similar position as ribosome-bound EF-G; it contacts a number of ribosomal proteins, both rRNAs and the A-site tRNA. The sequence is that of Large ribosomal subunit assembly factor BipA from Bacillus subtilis (strain 168).